Here is a 93-residue protein sequence, read N- to C-terminus: uncharacterized protein (93 aa).

The stretch at 25-68 forms a coiled coil; sequence DIKKLSQVKSELEQGKALLEEEKKELIEKNSNLNLQISNMNHLK.

This is an uncharacterized protein from Dictyostelium discoideum (Social amoeba).